A 190-amino-acid polypeptide reads, in one-letter code: Potassium-transporting ATPase KdpC subunit (190 aa).

Residues 10-30 form a helical membrane-spanning segment; the sequence is TFLFLLLITGGVYPLLTTALG.

The protein belongs to the KdpC family. The system is composed of three essential subunits: KdpA, KdpB and KdpC.

It localises to the cell inner membrane. Part of the high-affinity ATP-driven potassium transport (or Kdp) system, which catalyzes the hydrolysis of ATP coupled with the electrogenic transport of potassium into the cytoplasm. This subunit acts as a catalytic chaperone that increases the ATP-binding affinity of the ATP-hydrolyzing subunit KdpB by the formation of a transient KdpB/KdpC/ATP ternary complex. This is Potassium-transporting ATPase KdpC subunit from Shigella flexneri serotype 5b (strain 8401).